Consider the following 621-residue polypeptide: Archaeal Lon protease (621 aa).

Over 1–117 (MNEEVREILG…YKEEAMKKAQ (117 aa)) the chain is Cytoplasmic. 54-61 (GSPGTGKS) provides a ligand contact to ATP. A helical membrane pass occupies residues 118–136 (ARNFLIFTLVFLVIGYTVL). Over 137 to 141 (TNPGN) the chain is Extracellular. Residues 142–160 (LIWGIIAAVLILMMSRYFI) traverse the membrane as a helical segment. The Cytoplasmic portion of the chain corresponds to 161–621 (PREDRNVPKL…KFKELELAAV (461 aa)). Positions 423–602 (GYEVGRVNGL…NEVLEHVLED (180 aa)) constitute a Lon proteolytic domain. Catalysis depends on residues serine 509 and lysine 552.

The protein belongs to the peptidase S16 family. Archaeal LonB subfamily. As to quaternary structure, homohexamer. Organized in a ring with a central cavity.

The protein resides in the cell membrane. Its function is as follows. ATP-dependent serine protease that mediates the selective degradation of mutant and abnormal proteins as well as certain short-lived regulatory proteins. Degrades polypeptides processively. This is Archaeal Lon protease from Archaeoglobus fulgidus (strain ATCC 49558 / DSM 4304 / JCM 9628 / NBRC 100126 / VC-16).